Consider the following 445-residue polypeptide: Trigger factor (445 aa).

Residues glycine 162–threonine 247 enclose the PPIase FKBP-type domain.

The protein belongs to the FKBP-type PPIase family. Tig subfamily.

It localises to the cytoplasm. It catalyses the reaction [protein]-peptidylproline (omega=180) = [protein]-peptidylproline (omega=0). In terms of biological role, involved in protein export. Acts as a chaperone by maintaining the newly synthesized protein in an open conformation. Functions as a peptidyl-prolyl cis-trans isomerase. This chain is Trigger factor, found in Rickettsia rickettsii (strain Sheila Smith).